The sequence spans 880 residues: DNA-directed RNA polymerase subunit Rpo1N (880 aa).

8 residues coordinate Zn(2+): cysteine 58, cysteine 61, cysteine 68, histidine 71, cysteine 98, cysteine 101, cysteine 146, and cysteine 149. Mg(2+) is bound by residues aspartate 456, aspartate 458, and aspartate 460. Zn(2+) contacts are provided by arginine 573, cysteine 575, cysteine 580, histidine 582, and serine 584.

This sequence belongs to the RNA polymerase beta' chain family. Part of the 13-subunit RNA polymerase complex. Interacts with TFS4. As to quaternary structure, (Microbial infection) Binds viral protein RIP, which blocks global transcription. The cofactor is Mg(2+). Zn(2+) is required as a cofactor.

It localises to the cytoplasm. The catalysed reaction is RNA(n) + a ribonucleoside 5'-triphosphate = RNA(n+1) + diphosphate. Its activity is regulated as follows. (Microbial infection) Binds to viral protein RIP (AC Q3V4R7), which inhibits global transcription. Its function is as follows. DNA-dependent RNA polymerase (RNAP) catalyzes the transcription of DNA into RNA using the four ribonucleoside triphosphates as substrates. Forms the clamp head domain. This Sulfolobus acidocaldarius (strain ATCC 33909 / DSM 639 / JCM 8929 / NBRC 15157 / NCIMB 11770) protein is DNA-directed RNA polymerase subunit Rpo1N.